Here is a 107-residue protein sequence, read N- to C-terminus: Hydrogenase expression/formation protein HoxL (107 aa).

It belongs to the HupF/HypC family.

The protein is Hydrogenase expression/formation protein HoxL (hoxL) of Cupriavidus necator (strain ATCC 17699 / DSM 428 / KCTC 22496 / NCIMB 10442 / H16 / Stanier 337) (Ralstonia eutropha).